The chain runs to 130 residues: Small ribosomal subunit protein uS9 (130 aa).

It belongs to the universal ribosomal protein uS9 family.

The chain is Small ribosomal subunit protein uS9 from Salmonella paratyphi C (strain RKS4594).